The primary structure comprises 837 residues: Amyloid-beta A4 precursor protein-binding family A member 1 (837 aa).

3 disordered regions span residues 1-93 (MNHL…DTAE), 238-342 (YDER…SKEK), and 358-435 (EEVK…ESRK). Residues 23-38 (ESVEADLEHPEVEEEQ) show a composition bias toward acidic residues. Residues S78, S242, S246, S248, S263, S280, and S285 each carry the phosphoserine modification. The interval 226–314 (YRQEALGARL…TPAGGRPDSP (89 aa)) is munc-18-1 binding. The segment covering 238–254 (YDERSDGESDSPEKEAE) has biased composition (basic and acidic residues). A Phosphothreonine modification is found at T305. 2 positions are modified to phosphoserine: S313 and S367. Phosphothreonine is present on T370. Positions 373–436 (EPKEPIWVMR…ASTNKESRKS (64 aa)) are LIN-2/CASK binding. The span at 387 to 398 (PTRDCDDQRPMD) shows a compositional bias: basic and acidic residues. Residues 399-418 (GDSPSPGSSSPLGAESSSTS) are compositionally biased toward low complexity. Phosphoserine occurs at positions 401, 403, 408, and 568. One can recognise a PID domain in the interval 457–643 (DGIIFAANYL…LLNTQDMYND (187 aa)). The interval 626–641 (LSQKEYSDLLNTQDMY) is autoinhibitory helix linker. PDZ domains are found at residues 656–742 (DVFI…IVRC) and 747–822 (TVLI…TMPA).

Part of a multimeric complex containing STXBP1 and STX1A. Interacts with STXBP1. Also part of the brain-specific heterotrimeric complex LIN-10/X11-alpha, LIN-2/CASK, and LIN7. Component of the brain-specific heterotrimeric complex (LIN-10-LIN-2-LIN-7 complex) composed of at least APBA1, CASK, and LIN7, which associates with the motor protein KIF17 to transport vesicles along microtubules. Within the complex, interacts (via PDZ domain) with the motor protein KIF17; the interaction is direct and is required for association of KIF17 with the cargo that is to be transported. Both isoform 1 and isoform 2 bind to the cytoplasmic domain of amyloid protein (APP). Interacts (via PDZ 1 and 2 domains) with FSPB. Isoform 2, but not isoform 1, interacts (via its truncated PID domain) with active, GTP-bound RAB6A and RAB6B. In terms of tissue distribution, brain and spinal cord. Isoform 2 is expressed in testis and brain, but not detected in lung, liver or spleen.

The protein resides in the cytoplasm. It localises to the perinuclear region. It is found in the nucleus. Its subcellular location is the golgi apparatus. Its function is as follows. Putative function in synaptic vesicle exocytosis by binding to Munc18-1, an essential component of the synaptic vesicle exocytotic machinery. May modulate processing of the amyloid-beta precursor protein (APP) and hence formation of APP-beta. Component of the LIN-10-LIN-2-LIN-7 complex, which associates with the motor protein KIF17 to transport vesicles containing N-methyl-D-aspartate (NMDA) receptor subunit NR2B along microtubules. The chain is Amyloid-beta A4 precursor protein-binding family A member 1 (APBA1) from Homo sapiens (Human).